Consider the following 647-residue polypeptide: Threonine--tRNA ligase (647 aa).

Residues 1–61 (MIKITFPDGA…EEDGSIEIVT (61 aa)) form the TGS domain. The tract at residues 240–538 (DHRKLGKELD…LIETYKGAFP (299 aa)) is catalytic. Zn(2+) is bound by residues C334, H385, and H515.

The protein belongs to the class-II aminoacyl-tRNA synthetase family. In terms of assembly, homodimer. Requires Zn(2+) as cofactor.

It is found in the cytoplasm. The catalysed reaction is tRNA(Thr) + L-threonine + ATP = L-threonyl-tRNA(Thr) + AMP + diphosphate + H(+). Catalyzes the attachment of threonine to tRNA(Thr) in a two-step reaction: L-threonine is first activated by ATP to form Thr-AMP and then transferred to the acceptor end of tRNA(Thr). Also edits incorrectly charged L-seryl-tRNA(Thr). The protein is Threonine--tRNA ligase of Streptococcus agalactiae serotype V (strain ATCC BAA-611 / 2603 V/R).